The primary structure comprises 116 residues: uncharacterized protein (116 aa).

This is an uncharacterized protein from Homo sapiens (Human).